Here is a 366-residue protein sequence, read N- to C-terminus: Probable protein arginine N-methyltransferase 1.2 (366 aa).

One can recognise an SAM-dependent MTase PRMT-type domain in the interval A45 to S347. Residues E157 and E166 contribute to the active site.

This sequence belongs to the class I-like SAM-binding methyltransferase superfamily. Protein arginine N-methyltransferase family. As to quaternary structure, interacts with FIB2 and PRMT11.

The protein resides in the nucleus. The protein localises to the cytoplasm. Functionally, methylates (mono and asymmetric dimethylation) the guanidino nitrogens of arginyl residues present in a glycine and arginine-rich domain. Type I arginine methyltransferase active on both histones and non-histone proteins. Mediates the methylation of MED36A. The polypeptide is Probable protein arginine N-methyltransferase 1.2 (PRMT12) (Arabidopsis thaliana (Mouse-ear cress)).